Reading from the N-terminus, the 269-residue chain is Adenosylcobinamide-GDP ribazoletransferase (269 aa).

The next 5 helical transmembrane spans lie at 8-28 (QFNLILLAVSFFTRLPVPTAI), 41-61 (YFPLVGWLLAALLSAFYCFML), 70-90 (VCLLIIFSLMLTGAIHEDGLA), 114-136 (IGTYGTCALICALLSKFILLSSL), and 196-216 (VPAVLWLPLSSAILVIVSACV).

The protein belongs to the CobS family. Mg(2+) is required as a cofactor.

It localises to the cell inner membrane. It carries out the reaction alpha-ribazole + adenosylcob(III)inamide-GDP = adenosylcob(III)alamin + GMP + H(+). The enzyme catalyses alpha-ribazole 5'-phosphate + adenosylcob(III)inamide-GDP = adenosylcob(III)alamin 5'-phosphate + GMP + H(+). The protein operates within cofactor biosynthesis; adenosylcobalamin biosynthesis; adenosylcobalamin from cob(II)yrinate a,c-diamide: step 7/7. Functionally, joins adenosylcobinamide-GDP and alpha-ribazole to generate adenosylcobalamin (Ado-cobalamin). Also synthesizes adenosylcobalamin 5'-phosphate from adenosylcobinamide-GDP and alpha-ribazole 5'-phosphate. In Pseudoalteromonas atlantica (strain T6c / ATCC BAA-1087), this protein is Adenosylcobinamide-GDP ribazoletransferase.